The primary structure comprises 439 residues: Maintenance of mitochondrial morphology protein 1 (439 aa).

Topologically, residues M1–G76 are lumenal. The chain crosses the membrane as a helical span at residues L77–F97. At A98–I439 the chain is on the cytoplasmic side. Disordered stretches follow at residues K125 to S145, M309 to T336, and R405 to A425. Residues A165–P395 enclose the SMP-LTD domain. 2 stretches are compositionally biased toward low complexity: residues E315 to N326 and K410 to S424.

The protein belongs to the MMM1 family. In terms of assembly, homodimer. Component of the ER-mitochondria encounter structure (ERMES) or MDM complex, composed of MMM1, MDM10, MDM12 and MDM34. An MMM1 homodimer associates with one molecule of MDM12 on each side in a pairwise head-to-tail manner, and the SMP-LTD domains of MMM1 and MDM12 generate a continuous hydrophobic tunnel for phospholipid trafficking.

The protein resides in the endoplasmic reticulum membrane. Component of the ERMES/MDM complex, which serves as a molecular tether to connect the endoplasmic reticulum (ER) and mitochondria. Components of this complex are involved in the control of mitochondrial shape and protein biogenesis, and function in nonvesicular lipid trafficking between the ER and mitochondria. The MDM12-MMM1 subcomplex functions in the major beta-barrel assembly pathway that is responsible for biogenesis of all outer membrane beta-barrel proteins, and acts in a late step after the SAM complex. The MDM10-MDM12-MMM1 subcomplex further acts in the TOM40-specific pathway after the action of the MDM12-MMM1 complex. Essential for establishing and maintaining the structure of mitochondria and maintenance of mtDNA nucleoids. This chain is Maintenance of mitochondrial morphology protein 1, found in Candida albicans (strain WO-1) (Yeast).